Reading from the N-terminus, the 363-residue chain is Protein RecA (363 aa).

Position 79-86 (79-86) interacts with ATP; sequence GPESSGKT.

The protein belongs to the RecA family.

The protein resides in the cytoplasm. Its function is as follows. Can catalyze the hydrolysis of ATP in the presence of single-stranded DNA, the ATP-dependent uptake of single-stranded DNA by duplex DNA, and the ATP-dependent hybridization of homologous single-stranded DNAs. It interacts with LexA causing its activation and leading to its autocatalytic cleavage. This is Protein RecA from Methylobacterium radiotolerans (strain ATCC 27329 / DSM 1819 / JCM 2831 / NBRC 15690 / NCIMB 10815 / 0-1).